A 118-amino-acid chain; its full sequence is Putative pterin-4-alpha-carbinolamine dehydratase (118 aa).

Belongs to the pterin-4-alpha-carbinolamine dehydratase family.

It carries out the reaction (4aS,6R)-4a-hydroxy-L-erythro-5,6,7,8-tetrahydrobiopterin = (6R)-L-erythro-6,7-dihydrobiopterin + H2O. This is Putative pterin-4-alpha-carbinolamine dehydratase from Xanthomonas campestris pv. campestris (strain B100).